Here is a 310-residue protein sequence, read N- to C-terminus: MSHEKSVTEFTRDLVGVYINAGVVKSYAKDTKGNTRLYELSNKEIMDIGIEIHSICETDEKEYIDIDYCTEADLKIIRLANTISLLNQLHVAGRVCELPIKTLVHGTSLRGIIDRIIWNKDKKEIEVIDIKSHYIPFILDDPELKGMPQSKRLGYSFQLHVYVEMLDWLFTASPDALRDSFIGSIYNKDEPIHPIICSKLEIPKTITANNLFDILLKERSVFTDVKYTVLIMHIDQNYFKSEYKTGKASVVYESIKCNREWFKKMVFFDLAELERKKSLAEIHKKAAMAKKREEKKKIKQELKKSAKGKK.

Positions 269-307 form a coiled coil; the sequence is DLAELERKKSLAEIHKKAAMAKKREEKKKIKQELKKSAK. The span at 290–304 shows a compositional bias: basic and acidic residues; sequence KKREEKKKIKQELKK. Positions 290-310 are disordered; it reads KKREEKKKIKQELKKSAKGKK.

This is an uncharacterized protein from Magallana gigas (Pacific oyster).